The sequence spans 280 residues: Ribosomal RNA large subunit methyltransferase J (280 aa).

Residues histidine 19, histidine 42, serine 100, glutamate 118, aspartate 143–glycine 144, and aspartate 164 each bind S-adenosyl-L-methionine. Catalysis depends on aspartate 164, which acts as the Proton acceptor.

It belongs to the RlmJ family. Monomer.

It catalyses the reaction adenosine(2030) in 23S rRNA + S-adenosyl-L-methionine = N(6)-methyladenosine(2030) in 23S rRNA + S-adenosyl-L-homocysteine + H(+). Functionally, specifically methylates the adenine in position 2030 of 23S rRNA. Nascent 23S rRNA seems to be the natural substrate. Appears to be not necessary for ribosome assembly. Required for the utilization of extracellular DNA as the sole source of carbon and energy. This Escherichia coli (strain K12) protein is Ribosomal RNA large subunit methyltransferase J.